A 75-amino-acid polypeptide reads, in one-letter code: Large ribosomal subunit protein bL31 (75 aa).

Zn(2+) is bound by residues Cys16, Cys18, Cys37, and Cys40.

The protein belongs to the bacterial ribosomal protein bL31 family. Type A subfamily. Part of the 50S ribosomal subunit. Requires Zn(2+) as cofactor.

Binds the 23S rRNA. The sequence is that of Large ribosomal subunit protein bL31 from Pseudomonas syringae pv. tomato (strain ATCC BAA-871 / DC3000).